The sequence spans 1075 residues: MLRNGNEGMSTIPGFSQIQFEGFCRFINQGLAEELEKFPTIKDPDHEIAFQLFAKGYQLLEPSIKERNAVYESLTYSSELYVSARLIFGFDVQKETISIGNIPIMNSLGTFIINGIYRIVINQILLSPGIYYRSELDHKGISIYTGTIISDWGGRSELAIDKKERIWARVSRKQKISILVLSSAMGSNLREILDNVSYPEIFLSFPNAKEKKRIESKEKAILEFYQQFACVGGDLVFSESLCEELQKKFFQQKCELGRVGRRNMNRRLNLDIPQNNTFLLPRDVLAATDHLIGMKFGTGILDDDDMNHLKNKRIRSVADLLQDQFGLALGRLQHAVQKTIRRVFIRQSKPTPQTLVTPTSTSILLITTYETFFGTYPLAQVFDQTNPLTQTVHGRKVSCLGPGGLTGRTASFRSRDIHPSHYGRICPIDTSEGINVGLTGSLAIHARIDHWWGSIESPFYEISEKAKEKKERQVVYLSPNRDEYYMIAAGNSLSLNQGIQEEQVVPARYRQEFLTIAWEQIHVRSIFPFQYFSIGGSLIPFIEHNDANRALMSSNMQRQAVPLSRSEKCIVGTGLERQTALDSRVSVIAQREGKIISSDSHKILLSSSGKTISIPLVAHRRSNKNTCMHQKPRVPRGKSIKKGQILAEGAATVGGELALGKNVLVAYMPWEGYNFEDAVLISERLVYEDIYTSFHIRKYEIQTDTTSQGSAEKITKQIPHLEEHLLRNLDRNGVVRLGSWVETGDILVGKLTPQIASESSYIAEAGLLRAIFGLEVSTSKETSLKLPIGGRGRVIDVKWIQRDPFDIMVRVYILQKREIKVGDKVAGRHGNKGIISKILPRQDMPYLQDGAPVDMVFNPLGVPSRMNVGQIFESSLGLAGDLLKKHYRIAPFDERYEQEASRKLVFSELYEASKQTKNPWVFEPEYPGKSRIFDGRTGDPFEQPVLIGKSYILKLIHQVDEKIHGRSTGPYSLVTQQPVRGRAKQGGQRIGEMEVWALEGFGVAHILQEILTYKSDHLIARQEILNATIWGKRMPNHEDPPESFRVLVRELRSLALELNHFLVSEKNFQVNREDV.

Belongs to the RNA polymerase beta chain family. As to quaternary structure, in plastids the minimal PEP RNA polymerase catalytic core is composed of four subunits: alpha, beta, beta', and beta''. When a (nuclear-encoded) sigma factor is associated with the core the holoenzyme is formed, which can initiate transcription.

The protein resides in the plastid. It is found in the chloroplast. The enzyme catalyses RNA(n) + a ribonucleoside 5'-triphosphate = RNA(n+1) + diphosphate. Its function is as follows. DNA-dependent RNA polymerase catalyzes the transcription of DNA into RNA using the four ribonucleoside triphosphates as substrates. The chain is DNA-directed RNA polymerase subunit beta from Zea mays (Maize).